Here is a 365-residue protein sequence, read N- to C-terminus: MIKFLSALILLLVTTAAQAERIRDLTSVQGVRQNSLIGYGLVVGLDGTGDQTTQTPFTTQTLNNMLSQLGITVPTGTNMQLKNVAAVMVTASLPPFGRQGQTIDVVVSSMGNAKSLRGGTLLMTPLKGVDSQVYALAQGNILVGGAGASAGGSSVQVNQLNGGRITNGAVIERELPSQFGVGNTLNLQLNDEDFSMAQQIADTINRVRGYGSATALDARTIQVRVPSGNSSQVRFLADIQNMQVNVTPQDAKVVINSRTGSVVMNREVTLDSCAVAQGNLSVTVNRQANVSQPDTPFGGGQTVVTPQTQIDLRQSGGSLQSVRSSARLNNVVRALNALGATPMDLMSILQSMQSAGCLRAKLEII.

An N-terminal signal peptide occupies residues 1–19; that stretch reads MIKFLSALILLLVTTAAQA.

Belongs to the FlgI family. In terms of assembly, the basal body constitutes a major portion of the flagellar organelle and consists of four rings (L,P,S, and M) mounted on a central rod.

The protein localises to the periplasm. The protein resides in the bacterial flagellum basal body. Functionally, assembles around the rod to form the L-ring and probably protects the motor/basal body from shearing forces during rotation. The polypeptide is Flagellar P-ring protein (Shigella boydii serotype 4 (strain Sb227)).